Reading from the N-terminus, the 569-residue chain is Probable pyruvate decarboxylase Pdc101 (569 aa).

Substrate is bound by residues Asp-33 and His-120. The residue at position 233 (Ser-233) is a Phosphoserine. The segment at Asp-396–Ile-478 is thiamine pyrophosphate binding. The Mg(2+) site is built by Asp-446, Asn-473, and Gly-475. Glu-479 provides a ligand contact to substrate. Phosphothreonine is present on Thr-521. At Ser-522 the chain carries Phosphoserine.

This sequence belongs to the TPP enzyme family. As to quaternary structure, homotetramer. A metal cation serves as cofactor. Requires thiamine diphosphate as cofactor.

The enzyme catalyses a 2-oxocarboxylate + H(+) = an aldehyde + CO2. This is Probable pyruvate decarboxylase Pdc101 (pdc101) from Schizosaccharomyces pombe (strain 972 / ATCC 24843) (Fission yeast).